A 50-amino-acid chain; its full sequence is Parvalbumin (50 aa).

Residues Lys38 to Leu50 form the EF-hand domain.

Belongs to the parvalbumin family.

In terms of biological role, probably regulates the activity of the caudal neurosecretory system. Binds two calcium ions. The chain is Parvalbumin from Scyliorhinus canicula (Small-spotted catshark).